The following is a 417-amino-acid chain: Acetyltransferase nanB (417 aa).

A signal peptide spans 1–24; that stretch reads MRPSTTTLSLLVFLISSILLATTG. 5 consecutive transmembrane segments (helical) span residues 150 to 170, 284 to 304, 307 to 327, 356 to 376, and 389 to 409; these read LAVS…LKNI, YLNN…FNWI, VQDG…GYFL, VGAL…VYPF, and FVDV…AAAL.

This sequence belongs to the wax synthase family.

The protein localises to the membrane. It participates in secondary metabolite biosynthesis. In terms of biological role, acetyltransferase; part of the gene cluster that mediates the biosynthesis of the benzazepine alkaloid nanangelenin A which contains an unprecedented 3,4-dihydro-1-benzazepine-2,5-dione-N-prenyl-N-acetoxy-anthranilamide scaffold. The first step of nanangelenin biosynthesis is catalyzed by the indoleamine 2,3-dioxygenase nanC which produces N-formyl-kynurenine through the catabolism of tryptophan. The two-module NRPS nanA then utilizes anthranilate (Ant) and L-kynurenine (L-Kyn) to assemble the dipeptide product nanangelenin B. The first adenylation domain of nanA (A1) loads anthranilate onto the T1 domain, while A2 loads kynurenine, generated through spontaneous nonenzymatic deformylation of the nanC-supplied N-formyl-kynurenine. The peptide bond formation between the tethered amino acids is catalyzed by the first condensation domain (C1) between anthranilate's carbonyl carbon and kynurenine's aliphatic primary amine. The second C domain (C2) catalyzes the final cyclization event between the aromatic amine of kynurenine and the tethered carbonyl carbon, yielding nanangelenin B. The terminal T3 domain enhances the catalytic efficiency of C2, suggesting the T2-tethered Ant-L-Kyn is transferred to T3 prior to cyclization by C2. Once released from nanA, nanangelenin B is then prenylated by the prenyltransferase nanD to form nanangelenin C. Nanangelenin C is then N-hydroxylated by the FAD-dependent monooxygenase nanF and further acetylated by the acetyltransferase nanB to yield nanangelenin F. Finally, the N-methyltransferase nanE methylates the amide nitrogen of 1-benzazepine to convert nanangelenin F into nanangelenin A. NanE is also able to methylate most of the intermediates of the pathway such as nanangelenin B and nanangelenin C to produce nanangelenin D and nanangelenin E, respectively. The polypeptide is Acetyltransferase nanB (Aspergillus nanangensis).